Consider the following 419-residue polypeptide: Dual specificity protein phosphatase 7 (419 aa).

Positions 1–41 (MKNQLRGPPVRAHMSTSGAAAAGGTRAGSEPGAGSGSSAGI) are disordered. Low complexity predominate over residues 15–30 (STSGAAAAGGTRAGSE). Residues 31-41 (PGAGSGSSAGI) are compositionally biased toward gly residues. A Rhodanese domain is found at 68-187 (GGASLLLLDC…FQTEYSEHCE (120 aa)). The interval 216–240 (CSDGESDRELPSSATESDGSPVPSS) is disordered. Residues 227 to 240 (SSATESDGSPVPSS) show a composition bias toward polar residues. Residues 244 to 387 (FPVQILPYLY…LLDFERTLGL (144 aa)) form the Tyrosine-protein phosphatase domain. Cys-331 acts as the Phosphocysteine intermediate in catalysis. 331–337 (CLAGISR) is a binding site for substrate.

The protein belongs to the protein-tyrosine phosphatase family. Non-receptor class dual specificity subfamily. Interacts with MAPK1/ERK2; the interaction enhances DUSP7 phosphatase activity.

The protein localises to the cytoplasm. The enzyme catalyses O-phospho-L-tyrosyl-[protein] + H2O = L-tyrosyl-[protein] + phosphate. It catalyses the reaction O-phospho-L-seryl-[protein] + H2O = L-seryl-[protein] + phosphate. It carries out the reaction O-phospho-L-threonyl-[protein] + H2O = L-threonyl-[protein] + phosphate. With respect to regulation, strongly inhibited by sodium orthovanadate. Dual specificity protein phosphatase. Shows high activity towards MAPK1/ERK2. Also has lower activity towards MAPK14 and MAPK8. In arrested oocytes, plays a role in meiotic resumption. Promotes nuclear envelope breakdown and activation of the CDK1/Cyclin-B complex in oocytes, probably by dephosphorylating and inactivating the conventional protein kinase C (cPKC) isozyme PRKCB. May also inactivate PRKCA and/or PRKCG. Also important in oocytes for normal chromosome alignment on the metaphase plate and progression to anaphase, where it might regulate activity of the spindle-assembly checkpoint (SAC) complex. In Rattus norvegicus (Rat), this protein is Dual specificity protein phosphatase 7.